The following is a 341-amino-acid chain: UDP-N-acetylenolpyruvoylglucosamine reductase (341 aa).

An FAD-binding PCMH-type domain is found at 19 to 191; sequence MAVRAAHFCQ…TAVRFRLSRR (173 aa). Arg-167 is an active-site residue. Ser-241 functions as the Proton donor in the catalytic mechanism. Residue Glu-337 is part of the active site.

This sequence belongs to the MurB family. FAD is required as a cofactor.

It localises to the cytoplasm. The catalysed reaction is UDP-N-acetyl-alpha-D-muramate + NADP(+) = UDP-N-acetyl-3-O-(1-carboxyvinyl)-alpha-D-glucosamine + NADPH + H(+). The protein operates within cell wall biogenesis; peptidoglycan biosynthesis. Its function is as follows. Cell wall formation. This chain is UDP-N-acetylenolpyruvoylglucosamine reductase, found in Chromobacterium violaceum (strain ATCC 12472 / DSM 30191 / JCM 1249 / CCUG 213 / NBRC 12614 / NCIMB 9131 / NCTC 9757 / MK).